The primary structure comprises 166 residues: Ribosome maturation factor RimP (166 aa).

Belongs to the RimP family.

It is found in the cytoplasm. In terms of biological role, required for maturation of 30S ribosomal subunits. In Psychrobacter sp. (strain PRwf-1), this protein is Ribosome maturation factor RimP.